The primary structure comprises 309 residues: Chronophin (309 aa).

The active-site Nucleophile is the Asp25. Positions 25 and 27 each coordinate Mg(2+). Asp27 acts as the Proton donor in catalysis. Residues 58–60 (SNN), His178, and Lys209 contribute to the substrate site. Asp234 is a Mg(2+) binding site.

The protein belongs to the HAD-like hydrolase superfamily. In terms of assembly, homodimer. It depends on Mg(2+) as a cofactor.

The protein resides in the cytoplasm. The protein localises to the cytosol. It localises to the cytoskeleton. It is found in the cell projection. Its subcellular location is the ruffle membrane. The protein resides in the lamellipodium membrane. The protein localises to the cell membrane. The enzyme catalyses pyridoxal 5'-phosphate + H2O = pyridoxal + phosphate. It catalyses the reaction pyridoxine 5'-phosphate + H2O = pyridoxine + phosphate. The catalysed reaction is pyridoxamine + phosphate = pyridoxamine 5'-phosphate + H2O. It carries out the reaction O-phospho-L-seryl-[protein] + H2O = L-seryl-[protein] + phosphate. Functions as a pyridoxal phosphate (PLP) phosphatase, which also catalyzes the dephosphorylation of pyridoxine 5'-phosphate (PNP) and pyridoxamine 5'-phosphate (PMP), with order of substrate preference PLP &gt; PNP &gt; PMP and therefore plays a role in vitamin B6 metabolism. Also functions as a protein serine phosphatase that specifically dephosphorylates 'Ser-3' in proteins of the actin-depolymerizing factor (ADF)/cofilin family like CFL1 and DSTN. Thereby, regulates cofilin-dependent actin cytoskeleton reorganization, being required for normal progress through mitosis and normal cytokinesis. Does not dephosphorylate phosphothreonines in LIMK1. Does not dephosphorylate peptides containing phosphotyrosine. This Rattus norvegicus (Rat) protein is Chronophin.